Reading from the N-terminus, the 86-residue chain is Small ribosomal subunit protein bS18 (86 aa).

It belongs to the bacterial ribosomal protein bS18 family. In terms of assembly, part of the 30S ribosomal subunit. Forms a tight heterodimer with protein bS6.

Its function is as follows. Binds as a heterodimer with protein bS6 to the central domain of the 16S rRNA, where it helps stabilize the platform of the 30S subunit. The protein is Small ribosomal subunit protein bS18 of Heliobacterium modesticaldum (strain ATCC 51547 / Ice1).